Here is a 431-residue protein sequence, read N- to C-terminus: Serine--tRNA ligase (431 aa).

235-237 serves as a coordination point for L-serine; it reads TAE. ATP contacts are provided by residues 266–268 and Val-282; that span reads RRE. Position 289 (Glu-289) interacts with L-serine. 353-356 provides a ligand contact to ATP; that stretch reads EASS. Ser-389 is a binding site for L-serine.

It belongs to the class-II aminoacyl-tRNA synthetase family. Type-1 seryl-tRNA synthetase subfamily. As to quaternary structure, homodimer. The tRNA molecule binds across the dimer.

It localises to the cytoplasm. The catalysed reaction is tRNA(Ser) + L-serine + ATP = L-seryl-tRNA(Ser) + AMP + diphosphate + H(+). The enzyme catalyses tRNA(Sec) + L-serine + ATP = L-seryl-tRNA(Sec) + AMP + diphosphate + H(+). The protein operates within aminoacyl-tRNA biosynthesis; selenocysteinyl-tRNA(Sec) biosynthesis; L-seryl-tRNA(Sec) from L-serine and tRNA(Sec): step 1/1. Its function is as follows. Catalyzes the attachment of serine to tRNA(Ser). Is also able to aminoacylate tRNA(Sec) with serine, to form the misacylated tRNA L-seryl-tRNA(Sec), which will be further converted into selenocysteinyl-tRNA(Sec). This is Serine--tRNA ligase from Chlorobium phaeobacteroides (strain DSM 266 / SMG 266 / 2430).